The following is a 444-amino-acid chain: Cortexillin-1 (444 aa).

The actin-binding stretch occupies residues 1–227 (MAGKDWEIVQ…VLYTSLFFHA (227 aa)). Calponin-homology (CH) domains follow at residues 8–115 (IVQE…RKYR) and 124–229 (KSSE…HAYR). Coiled-coil stretches lie at residues 227-352 (AYRA…TRIR) and 410-434 (LATK…DLKA).

It belongs to the cortexillin family. As to quaternary structure, homodimer; parallel.

The protein localises to the cytoplasm. The protein resides in the cytoskeleton. Its function is as follows. Actin-bundling protein. When linked to F-actin the actin filaments form preferentially anti-parallel bundles that associate into meshworks. Plays a major role in cytokinesis. Negatively regulates cortical localization of rapgap1. In Dictyostelium discoideum (Social amoeba), this protein is Cortexillin-1 (ctxA).